Here is a 1150-residue protein sequence, read N- to C-terminus: PAN2-PAN3 deadenylation complex catalytic subunit PAN2 (1150 aa).

WD repeat units follow at residues 26–67, 114–156, 158–194, and 290–328; these read AHHS…MEFQ, GHVN…ITKE, PAPN…VINT, and GHTH…VSFV. The segment at 326-471 is linker; sequence SFVDQGLPVE…IRTDIESLKS (146 aa). One can recognise a USP domain in the interval 472 to 862; it reads VVPNMYHLFE…TPLVVMFQLK (391 aa). In terms of domain architecture, Exonuclease spans 911-1079; that stretch reads AIDAEFVLAK…HDSIEDANTA (169 aa). Asp913, Glu915, Asp1022, and Asp1075 together coordinate a divalent metal cation. The disordered stretch occupies residues 1118–1150; the sequence is GQSAQRTETPPMVDDAQPGALLPYQPPELLQGS.

It belongs to the peptidase C19 family. PAN2 subfamily. In terms of assembly, forms a heterotrimer with an asymmetric homodimer of the regulatory subunit PAN3 to form the poly(A)-nuclease (PAN) deadenylation complex. Requires a divalent metal cation as cofactor.

Its subcellular location is the cytoplasm. The enzyme catalyses Exonucleolytic cleavage of poly(A) to 5'-AMP.. Positively regulated by the regulatory subunit PAN3. In terms of biological role, catalytic subunit of the poly(A)-nuclease (PAN) deadenylation complex, one of two cytoplasmic mRNA deadenylases involved in mRNA turnover. PAN specifically shortens poly(A) tails of RNA and the activity is stimulated by poly(A)-binding protein PAB1. PAN deadenylation is followed by rapid degradation of the shortened mRNA tails by the CCR4-NOT complex. Deadenylated mRNAs are then degraded by two alternative mechanisms, namely exosome-mediated 3'-5' exonucleolytic degradation, or deadenylation-dependent mRNA decaping and subsequent 5'-3' exonucleolytic degradation by XRN1. May also be involved in post-transcriptional maturation of mRNA poly(A) tails. The sequence is that of PAN2-PAN3 deadenylation complex catalytic subunit PAN2 from Pyricularia oryzae (strain 70-15 / ATCC MYA-4617 / FGSC 8958) (Rice blast fungus).